Reading from the N-terminus, the 234-residue chain is LexA repressor (234 aa).

The H-T-H motif DNA-binding region spans 26 to 46; it reads FDEMKTALELTSKSGIHRLIT. Residues Ser155 and Lys193 each act as for autocatalytic cleavage activity in the active site.

The protein belongs to the peptidase S24 family. As to quaternary structure, homodimer.

The catalysed reaction is Hydrolysis of Ala-|-Gly bond in repressor LexA.. Represses a number of genes involved in the response to DNA damage (SOS response), including recA and lexA. In the presence of single-stranded DNA, RecA interacts with LexA causing an autocatalytic cleavage which disrupts the DNA-binding part of LexA, leading to derepression of the SOS regulon and eventually DNA repair. The polypeptide is LexA repressor (Bartonella henselae (strain ATCC 49882 / DSM 28221 / CCUG 30454 / Houston 1) (Rochalimaea henselae)).